Consider the following 85-residue polypeptide: Large ribosomal subunit protein bL27 (85 aa).

The interval 1–22 is disordered; that stretch reads MAHKKAGGSTRNGRDSEAKRMG.

Belongs to the bacterial ribosomal protein bL27 family.

The chain is Large ribosomal subunit protein bL27 from Escherichia coli O6:K15:H31 (strain 536 / UPEC).